Reading from the N-terminus, the 2084-residue chain is MNLEVLCGRINVENGLSLGEPGLYDQIYDRPGLPDLDVTVDATGVTVDIGAVPDSASQLGSSINAGLITIQLSEAYKINHDFTFSGLSKTTDRRLSEVFPITHDGSDGMTPDVIHTRLDGTIVVVEFTTTRSHNIGGLEAAYRTKIEKYRDPISRRVDIMENPRVFFGVIVVSSGGVLSNMPLTQDEAEELMYRFCIANEIYTKARSMDADIELQKSEEELEAISRALSFFSLFEPNIERVEGTFPNSEIEMLEQFLSTPADVDFITKTLKAKEVEAYADLCDSHYLKPEKTIQERLEINRCEAIDKTQDLLAGLHARSNKQTSLNRGTVKLPPWLPKPSSESIDIKTDSGFGSLMDHGAYGELWAKCLLDVSLGNVEGVVSDPAKELDIAISDDPEKDTPKEAKITYRRFKPALSSSARQEFSLQGVEGKKWKRMAANQKKEKESHDALSPFLDVEDIGDFLTFNNLLADSRYGDESVQRAVSILLEKASAMQDTELTHALNDSFKRNLSSNVVQWSLWVSCLAQELASALKQHCRAGEFIIKKLKFWPIYVIIKPTKSSSHIFYSLGIRKADVTRRLTGRVFSETIDAGEWELTEFKSLKTCKLTNLVNLPCTMLNSIAFWREKLGVAPWLVRKPCSELREQVGLTFLISLEDKSKTEEIITLTRYTQMEGFVSPPMLPKPQKMLGKLDGPLRTKLQVYLLRKHLDCMVRIASQPFSLIPREGRVEWGGTFHAISGRSTNLENMVNSWYIGYYKNKEESTELNALGEMYKKIVEMEEDKPSSPEFLGWGDTDSPKKHEFSRSFLRAACSSLEREIAQRHGRQWKQNLEERVLREIGTKNILDLASMKATSNFSKDWELYSEVQTKEYHRSKLLEKMATLIEKGVMWYIDAVGQAWKAVLDDGCMRICLFKKNQHGGLREIYVMDANARLVQFGVETMARCVCELSPHETVANPRLKNSIIENHGLKSARSLGPGSININSSNDAKKWNQGHYTTKLALVLCWFMPAKFHRFIWAAISMFRRKKMMVDLRFLAHLSSKSESRSSDPFREAMTDAFHGNREVSWMDKGRTYIKTETGMMQGILHFTSSLLHSCVQSFYKSYFVSKLKEGYMGESISGVVDVIEGSDDSAIMISIRPKSDMDEVRSRFFVANLLHSVKFLNPLFGIYSSEKSTVNTVYCVEYNSEFHFHRHLVRPTLRWIAASHQISETEALASRQEDYSNLLTQCLEGGASFSLTYLIQCAQLLHHYMLLGLCLHPLFGTFMGMLISDPDPALGFFLMDNPAFAGGAGFRFNLWRACKTTDLGRKYAYYFNEIQGKTKGDEDYRALDATSGGTLSHSVMVYWGDRKKYQALLNRMGLPEDWVEQIDENPGVLYRRAANKKELLLKLAEKVHSPGVTSSLSKGHVVPRVVAAGVYLLSRHCFRFSSSIHGRGSTQKASLIKLLMMSSISAMKHGGSLNPNQERMLFPQAQEYDRVCTLLEEVEHLTGKFVVRERNIVRSRIDLFQEPVDLRCKAEDLVSEVWFGLKRTKLGPRLLKEEWDKLRASFAWLSTDPSETLRDGPFLSHVQFRNFIAHVDAKSRSVRLLGAPVKKSGGVTTISQVVRMNFFPGFSLEAEKSLDNQERLESISILKHVLFMVLNGPYTEEYKLEMIIEAFSTLVIPQPSEVIRKSRTMTLCLLSNYLSSRGGSILDQIERAQSGTLGGFSKPQKTFIRPGGGVGYKGKGVWTGVMEDTHVQILIDGDGTSNWLEEIRLSSDARLYDVIESIRRLCDDLGINNRVASAYRGHCMVRLSGFKIKPASRTDGCPVRIMERGFRIRELQNPDEVKMRVRGDILNLSVTIQEGRVMNILSYRPRDTDISESAAAYLWSNRDLFSFGKKEPSCSWICLKTLDNWAWSHASVLLANDRKTQGIDNRAMGNIFRDCLEGSLRKQGLMRSKLTEMVEKNVVPLTTQELVDILEEDIDFSDVIAVELSEGSLDIESIFDGAPILWSAEVEEFGEGVVAVSYSSKYYHLTLMDQAAITMCAIMGKEGCRGLLTEKRCMAAIREQVRPFLIFLQIPEDSISWVSDQFCDSRGLDEESTIMWG.

Positions 20–221 (EPGLYDQIYD…IELQKSEEEL (202 aa)) are endonuclease. Residues His-80, Asp-112, and Glu-126 each coordinate Mn(2+). Lys-145 (for endonuclease activity) is an active-site residue. The region spanning 969-1172 (SARSLGPGSI…FGIYSSEKST (204 aa)) is the RdRp catalytic domain. A Mg(2+)-binding site is contributed by Asp-1127. A cap-binding region spans residues 1695 to 1810 (AQSGTLGGFS…TDGCPVRIME (116 aa)).

This sequence belongs to the Bunyavirales RNA polymerase family. In terms of assembly, homomultimer. Interacts with the glycoprotein N; this interaction allows efficient polymerase packaging into virus particles. Interacts with nucleoprotein N. Requires Mn(2+) as cofactor. Mg(2+) serves as cofactor.

It localises to the host Golgi apparatus. Its subcellular location is the host endoplasmic reticulum. The protein resides in the host endoplasmic reticulum-Golgi intermediate compartment. It is found in the virion. It carries out the reaction RNA(n) + a ribonucleoside 5'-triphosphate = RNA(n+1) + diphosphate. Its activity is regulated as follows. Inhibited by Baloxavir acid (BXA). Its function is as follows. RNA-dependent RNA polymerase, which is responsible for the replication and transcription of the viral RNA genome using antigenomic RNA as an intermediate. During transcription, synthesizes subgenomic RNAs and assures their capping by a cap-snatching mechanism, which involves the endonuclease activity cleaving the host capped pre-mRNAs. These short capped RNAs are then used as primers for viral transcription. The 3'-end of subgenomic mRNAs molecules are not polyadenylated. During replication, the polymerase binds the 5' and 3' vRNA extremities at distinct sites. In turn, significant conformational changes occur in the polymerase and in vRNA to initiate active RNA synthesis. As a consequence of the use of the same enzyme for both transcription and replication, these mechanisms need to be well coordinated. The sequence is that of RNA-directed RNA polymerase L from Dabie bandavirus (Severe fever with thrombocytopenia virus).